The chain runs to 321 residues: Non-canonical heme oxygenase HOZ, chloroplastic (321 aa).

A chloroplast-targeting transit peptide spans 1 to 45; the sequence is MKSLVAHFSTPLITARLVPRCIIHRASISAVSFSTVRRRFSPLTM. The dimerization stretch occupies residues 96–116; the sequence is CGMLSTFSQKYEGYPSGSMVD. Heme b-binding residues include S130, V134, and H135. Dimerization stretches follow at residues 144–166 and 205–208; these read KCSL…LHGD and KVVR.

Homodimer. Binds to heme in the interdimer interface; the heme iron is coordinated by a fixed water molecule.

The protein localises to the plastid. It is found in the chloroplast. Dimeric beta-barrel protein binding to heme and catalyzing its degradation to produce biliverdin. May function in the tetrapyrrole biosynthetic pathway. The chain is Non-canonical heme oxygenase HOZ, chloroplastic from Arabidopsis thaliana (Mouse-ear cress).